Here is a 155-residue protein sequence, read N- to C-terminus: Small ribosomal subunit protein uS7c (155 aa).

The protein belongs to the universal ribosomal protein uS7 family. As to quaternary structure, part of the 30S ribosomal subunit.

The protein resides in the plastid. The protein localises to the chloroplast. Its function is as follows. One of the primary rRNA binding proteins, it binds directly to 16S rRNA where it nucleates assembly of the head domain of the 30S subunit. This Beta vulgaris (Sugar beet) protein is Small ribosomal subunit protein uS7c.